We begin with the raw amino-acid sequence, 316 residues long: SWR complex protein 2 (316 aa).

Disordered regions lie at residues 1–81 (MSAT…GEEV), 93–127 (KRKI…KKKY), and 153–180 (ETRL…TMTQ). Residues 20 to 31 (KMRELLEKEHLR) show a composition bias toward basic and acidic residues. A coiled-coil region spans residues 20–95 (KMRELLEKEH…RDEERIKKRK (76 aa)). Residues 40 to 56 (EKEDEEYNIEEEEEAER) are compositionally biased toward acidic residues. Phosphoserine is present on residues serine 64 and serine 65. Residues 70 to 81 (ELKKLEEEGEEV) show a composition bias toward basic and acidic residues. Residues 167-180 (VSASANRQKGTMTQ) show a composition bias toward polar residues.

This sequence belongs to the VPS72/YL1 family. Component of the SWR1 chromatin-remodeling complex.

Its subcellular location is the nucleus. Participates in the catalytic exchange of histone H2A for the H2A variant pht1, an euchromatin-specific factor, leading to chromatin remodeling and changes in transcription of targeted genes. This Schizosaccharomyces pombe (strain 972 / ATCC 24843) (Fission yeast) protein is SWR complex protein 2 (swc2).